Reading from the N-terminus, the 297-residue chain is 1D-myo-inositol 2-acetamido-2-deoxy-alpha-D-glucopyranoside deacetylase (297 aa).

Zn(2+) is bound by residues His-11, Asp-14, and His-154.

It belongs to the MshB deacetylase family. The cofactor is Zn(2+).

It carries out the reaction 1D-myo-inositol 2-acetamido-2-deoxy-alpha-D-glucopyranoside + H2O = 1D-myo-inositol 2-amino-2-deoxy-alpha-D-glucopyranoside + acetate. Its function is as follows. Catalyzes the deacetylation of 1D-myo-inositol 2-acetamido-2-deoxy-alpha-D-glucopyranoside (GlcNAc-Ins) in the mycothiol biosynthesis pathway. This chain is 1D-myo-inositol 2-acetamido-2-deoxy-alpha-D-glucopyranoside deacetylase, found in Tsukamurella paurometabola (strain ATCC 8368 / DSM 20162 / CCUG 35730 / CIP 100753 / JCM 10117 / KCTC 9821 / NBRC 16120 / NCIMB 702349 / NCTC 13040) (Corynebacterium paurometabolum).